The sequence spans 621 residues: Probable bifunctional dTTP/UTP pyrophosphatase/methyltransferase protein (621 aa).

Positions 11 to 223 (LHKRVVLASA…PPRPEDLRRS (213 aa)) are MAF-like. At serine 21 the chain carries Phosphoserine. The Proton acceptor; for pyrophosphatase activity role is filled by aspartate 88. Residue serine 228 is modified to Phosphoserine. Threonine 234 carries the phosphothreonine modification. The segment at 235–279 (FEDLSDVEGGGSEPTQRDAGSRDEKAEAGEAGQATAEAECHRTRE) is disordered. A Phosphoserine modification is found at serine 239. Over residues 249 to 262 (TQRDAGSRDEKAEA) the composition is skewed to basic and acidic residues. Positions 277–621 (TRETLPPFPT…DAILATKVAP (345 aa)) are ASMT-like. Serine 421 is modified (phosphoserine). S-adenosyl-L-methionine is bound by residues aspartate 482, 508–510 (GDF), and arginine 525.

In the N-terminal section; belongs to the Maf family. YhdE subfamily. This sequence in the C-terminal section; belongs to the class I-like SAM-binding methyltransferase superfamily. Cation-independent O-methyltransferase family. In terms of assembly, homodimer. It depends on a divalent metal cation as a cofactor. In terms of tissue distribution, widely expressed. In adult, highly expressed in pancreas, placenta, fibroblast, thymus, prostate, testis, ovary and colon. Expressed at lower levels in spleen, small intestine and leukocytes. In fetus, expressed at high levels in the lung and kidney and at lower level in brain and liver.

It catalyses the reaction dTTP + H2O = dTMP + diphosphate + H(+). It carries out the reaction UTP + H2O = UMP + diphosphate + H(+). The enzyme catalyses CTP + H2O = CMP + diphosphate + H(+). The catalysed reaction is psi-UTP + H2O = psi-UMP + diphosphate + H(+). It catalyses the reaction 5-methyl-UTP + H2O = 5-methyl-UMP + diphosphate + H(+). It carries out the reaction 5-methyl-CTP + H2O = 5-methyl-CMP + diphosphate + H(+). Functionally, nucleoside triphosphate pyrophosphatase that hydrolyzes dTTP and UTP. Can also hydrolyze CTP and the modified nucleotides pseudo-UTP, 5-methyl-UTP (m(5)UTP) and 5-methyl-CTP (m(5)CTP). Has weak activity with dCTP, 8-oxo-GTP and N(4)-methyl-dCTP. May have a dual role in cell division arrest and in preventing the incorporation of modified nucleotides into cellular nucleic acids. In addition, the presence of the putative catalytic domain of S-adenosyl-L-methionine binding in the C-terminal region argues for a methyltransferase activity. In Homo sapiens (Human), this protein is Probable bifunctional dTTP/UTP pyrophosphatase/methyltransferase protein (ASMTL).